The chain runs to 340 residues: DNA-directed RNA polymerase subunit alpha (340 aa).

The segment at 1–235 (MYRNWTELIK…DQLNPFINFD (235 aa)) is alpha N-terminal domain (alpha-NTD). An alpha C-terminal domain (alpha-CTD) region spans residues 251–340 (WNPNLFRKVD…LSKQFEEENF (90 aa)).

Belongs to the RNA polymerase alpha chain family. In terms of assembly, homodimer. The RNAP catalytic core consists of 2 alpha, 1 beta, 1 beta' and 1 omega subunit. When a sigma factor is associated with the core the holoenzyme is formed, which can initiate transcription.

The catalysed reaction is RNA(n) + a ribonucleoside 5'-triphosphate = RNA(n+1) + diphosphate. Functionally, DNA-dependent RNA polymerase catalyzes the transcription of DNA into RNA using the four ribonucleoside triphosphates as substrates. The chain is DNA-directed RNA polymerase subunit alpha from Magnetococcus marinus (strain ATCC BAA-1437 / JCM 17883 / MC-1).